The primary structure comprises 574 residues: Transmembrane glycoprotein NMB (574 aa).

Residues 1-22 (MESLCGVLGFLLLAAGLPLQAA) form the signal peptide. Topologically, residues 23–502 (KRFRDVLGHE…DPDSPLRAVN (480 aa)) are extracellular. 9 N-linked (GlcNAc...) asparagine glycosylation sites follow: N93, N134, N200, N249, N275, N296, N300, N306, and N312. The 89-residue stretch at 250–338 (LSDEIFLRDL…STPPPPSTPP (89 aa)) folds into the PKD domain. A disordered region spans residues 320 to 353 (PGPCPPPSPSTPPPPSTPPSPPPSPLPTLSTPSP). Over residues 321–345 (GPCPPPSPSTPPPPSTPPSPPPSPL) the composition is skewed to pro residues. N463 and N471 each carry an N-linked (GlcNAc...) asparagine glycan. A helical membrane pass occupies residues 503–523 (GVLISIGCLAVLVTMVTILLY). The Cytoplasmic segment spans residues 524–574 (KKHKAYKPIGNCPRNTVKGKGLSVLLSHAKAPFFRGDQEKDPLLQDKPRTL). Residue S546 is modified to Phosphoserine. A Cell attachment site motif is present at residues 558–560 (RGD).

Belongs to the PMEL/NMB family. May be up-regulated in bone metastatic breast cancer cells.

It is found in the cell membrane. The protein resides in the melanosome membrane. The protein localises to the early endosome membrane. Its function is as follows. Could be a melanogenic enzyme. The chain is Transmembrane glycoprotein NMB (Gpnmb) from Mus musculus (Mouse).